Reading from the N-terminus, the 525-residue chain is GMP synthase [glutamine-hydrolyzing] (525 aa).

Positions Arg-9–Leu-207 constitute a Glutamine amidotransferase type-1 domain. Residue Cys-86 is the Nucleophile of the active site. Catalysis depends on residues His-181 and Glu-183. Positions Trp-208–Arg-400 constitute a GMPS ATP-PPase domain. Ser-235 to Ser-241 contributes to the ATP binding site.

Homodimer.

The enzyme catalyses XMP + L-glutamine + ATP + H2O = GMP + L-glutamate + AMP + diphosphate + 2 H(+). The protein operates within purine metabolism; GMP biosynthesis; GMP from XMP (L-Gln route): step 1/1. In terms of biological role, catalyzes the synthesis of GMP from XMP. This chain is GMP synthase [glutamine-hydrolyzing], found in Klebsiella pneumoniae subsp. pneumoniae (strain ATCC 700721 / MGH 78578).